The chain runs to 525 residues: GMP synthase [glutamine-hydrolyzing] (525 aa).

Residues 9 to 207 form the Glutamine amidotransferase type-1 domain; sequence RILILDFGSQ…VLGICGCEAL (199 aa). The active-site Nucleophile is Cys-86. Active-site residues include His-181 and Glu-183. The GMPS ATP-PPase domain occupies 208–400; it reads WTSATIIEDA…LGLPYDMLYR (193 aa). 235-241 serves as a coordination point for ATP; that stretch reads SGGVDSS.

In terms of assembly, homodimer.

The enzyme catalyses XMP + L-glutamine + ATP + H2O = GMP + L-glutamate + AMP + diphosphate + 2 H(+). It functions in the pathway purine metabolism; GMP biosynthesis; GMP from XMP (L-Gln route): step 1/1. Catalyzes the synthesis of GMP from XMP. This is GMP synthase [glutamine-hydrolyzing] from Yersinia pestis bv. Antiqua (strain Antiqua).